The primary structure comprises 282 residues: NADPH-dependent 7-cyano-7-deazaguanine reductase (282 aa).

88–90 (IES) serves as a coordination point for substrate. An NADPH-binding site is contributed by 90–91 (SK). The active-site Thioimide intermediate is Cys-189. Asp-196 (proton donor) is an active-site residue. 228 to 229 (HE) contributes to the substrate binding site. 257-258 (RG) is a binding site for NADPH.

Belongs to the GTP cyclohydrolase I family. QueF type 2 subfamily. In terms of assembly, homodimer.

Its subcellular location is the cytoplasm. The enzyme catalyses 7-aminomethyl-7-carbaguanine + 2 NADP(+) = 7-cyano-7-deazaguanine + 2 NADPH + 3 H(+). It functions in the pathway tRNA modification; tRNA-queuosine biosynthesis. Functionally, catalyzes the NADPH-dependent reduction of 7-cyano-7-deazaguanine (preQ0) to 7-aminomethyl-7-deazaguanine (preQ1). The protein is NADPH-dependent 7-cyano-7-deazaguanine reductase of Photorhabdus laumondii subsp. laumondii (strain DSM 15139 / CIP 105565 / TT01) (Photorhabdus luminescens subsp. laumondii).